Reading from the N-terminus, the 524-residue chain is mRNA cap guanine-N(7) methyltransferase (524 aa).

The tract at residues 1-155 (MSDKEAGVAS…DKKRAHDEAE (155 aa)) is disordered. Positions 19 to 40 (NKDEVDVKNTEEHSKQESKSDI) are enriched in basic and acidic residues. Positions 68–77 (NNKVISSVYN) are enriched in polar residues. Residues 90 to 99 (KTTDKYDKYG) are compositionally biased toward basic and acidic residues. Residues 100–112 (SRSTPIATPTAPV) show a composition bias toward polar residues. The mRNA cap 0 methyltransferase domain maps to 214 to 522 (SPIYKLRNFN…FYIGFVFEKL (309 aa)). 223-224 (NN) is a binding site for mRNA. The S-adenosyl-L-methionine site is built by Lys227, Cys251, Asp273, Asp319, Gln349, and Tyr354.

Belongs to the class I-like SAM-binding methyltransferase superfamily. mRNA cap 0 methyltransferase family.

It is found in the nucleus. It catalyses the reaction a 5'-end (5'-triphosphoguanosine)-ribonucleoside in mRNA + S-adenosyl-L-methionine = a 5'-end (N(7)-methyl 5'-triphosphoguanosine)-ribonucleoside in mRNA + S-adenosyl-L-homocysteine. Functionally, responsible for methylating the 5'-cap structure of mRNAs. This is mRNA cap guanine-N(7) methyltransferase (ABD1) from Debaryomyces hansenii (strain ATCC 36239 / CBS 767 / BCRC 21394 / JCM 1990 / NBRC 0083 / IGC 2968) (Yeast).